The sequence spans 435 residues: Protein translocase subunit SecY (435 aa).

Transmembrane regions (helical) follow at residues isoleucine 19–glycine 39, phenylalanine 68–leucine 88, tyrosine 116–leucine 136, valine 147–leucine 167, glycine 179–isoleucine 199, phenylalanine 216–valine 236, valine 269–valine 289, isoleucine 311–valine 331, valine 372–glycine 392, and aspartate 395–methionine 415.

This sequence belongs to the SecY/SEC61-alpha family. In terms of assembly, component of the Sec protein translocase complex. Heterotrimer consisting of SecY, SecE and SecG subunits. The heterotrimers can form oligomers, although 1 heterotrimer is thought to be able to translocate proteins. Interacts with the ribosome. Interacts with SecDF, and other proteins may be involved. Interacts with SecA.

Its subcellular location is the cell membrane. The central subunit of the protein translocation channel SecYEG. Consists of two halves formed by TMs 1-5 and 6-10. These two domains form a lateral gate at the front which open onto the bilayer between TMs 2 and 7, and are clamped together by SecE at the back. The channel is closed by both a pore ring composed of hydrophobic SecY resides and a short helix (helix 2A) on the extracellular side of the membrane which forms a plug. The plug probably moves laterally to allow the channel to open. The ring and the pore may move independently. This Streptococcus sanguinis (strain SK36) protein is Protein translocase subunit SecY.